The chain runs to 856 residues: MESQYNAAAIEQKWQQDWVKQGLDKTPENSNKPKFYALSMFPYPSGNLHMGHVRNYVITDVIARLKRLQGYRVLHPMGWDAFGLPAENAAIDRGIPPAEWTYKNMSQMKQQLQTLGLSIDWEREVATCAPEYYKWTQWLFLQLYQAGLAYQKEAAVNWDPIDQTVLANEQVDSEGYSWRSGAKVERKLLRQWFLKITDYAEQLLTDLDKLPGWPDRVKLMQENWIGKSVGAYLEFPIKGSEEKIAVFTTRPDTVYGVTYVVLAPEHPLTLKVTTPEQKAAVDAFIEEVSNESEIERTAEDKPKRGILTGGTAINPFNGQEIPILIADYVLYEYGTGAVMGVPAHDTRDFKFAKEKQLPIKVVIIPENSDNTNPPLTEAYTDPGIMVNSGIFDGIQSTEGKTAIIEYAEKEGYGKARIQYRLRDWLISRQRYWGCPIPVVHCPSCGTVAVPDADLPVKLPENVEFTGRDASPLAKLEDWINVPCPSCGEPAKRETDTMDTFIDSSWYYLRYTDANNNQEAFNLEKANDWMAIDQYVGGIEHAILHLLYSRFFTKALRDRGLVNIDEPFKRLLTQGMVQGLTYKNPQTGKYVPSENVIFQDDHYRDKETGEILSFFYEKMSKSKYNGVDPKQVLGKYGADTARMFILFKAPPEKDLEWDDADVEGQFRFLNRVWRLVANYLENKPKTVKKASELTKEDKDLRRAIHTAIKEISEDLEGDYQFNTAVSELMKLSNALTDAKCLESGVYQEGIETLLILLAPFAPHIAEELWHNLGYEKSIHLQSWPTVNPDALVVDEITLVIQIMGKTRGTIQVSATATKDELEKLARESEVGQRYLDGQDVKKVIVVPGKLVNFVIAK.

The short motif at 42–52 (PYPSGNLHMGH) is the 'HIGH' region element. The 'KMSKS' region signature appears at 617–621 (KMSKS). An ATP-binding site is contributed by Lys-620.

It belongs to the class-I aminoacyl-tRNA synthetase family.

It is found in the cytoplasm. It catalyses the reaction tRNA(Leu) + L-leucine + ATP = L-leucyl-tRNA(Leu) + AMP + diphosphate. The polypeptide is Leucine--tRNA ligase (Rippkaea orientalis (strain PCC 8801 / RF-1) (Cyanothece sp. (strain PCC 8801))).